Reading from the N-terminus, the 172-residue chain is Small ribosomal subunit protein uS5 (172 aa).

An S5 DRBM domain is found at 17-80 (LREKMISVNR…DEARRKMVKV (64 aa)).

It belongs to the universal ribosomal protein uS5 family. Part of the 30S ribosomal subunit. Contacts proteins S4 and S8.

In terms of biological role, with S4 and S12 plays an important role in translational accuracy. Located at the back of the 30S subunit body where it stabilizes the conformation of the head with respect to the body. This is Small ribosomal subunit protein uS5 from Cupriavidus metallidurans (strain ATCC 43123 / DSM 2839 / NBRC 102507 / CH34) (Ralstonia metallidurans).